The chain runs to 133 residues: Small ribosomal subunit protein uS8 (133 aa).

Belongs to the universal ribosomal protein uS8 family. As to quaternary structure, part of the 30S ribosomal subunit. Contacts proteins S5 and S12.

In terms of biological role, one of the primary rRNA binding proteins, it binds directly to 16S rRNA central domain where it helps coordinate assembly of the platform of the 30S subunit. In Deinococcus deserti (strain DSM 17065 / CIP 109153 / LMG 22923 / VCD115), this protein is Small ribosomal subunit protein uS8.